The primary structure comprises 284 residues: D-tagatose-1,6-bisphosphate aldolase subunit GatY (284 aa).

Residue Asp-82 is the Proton donor of the active site. Residues His-83 and His-180 each contribute to the Zn(2+) site. Dihydroxyacetone phosphate is bound at residue Gly-181. A Zn(2+)-binding site is contributed by His-208. Residues 209–211 (GAS) and 230–233 (NVAT) contribute to the dihydroxyacetone phosphate site.

The protein belongs to the class II fructose-bisphosphate aldolase family. TagBP aldolase GatY subfamily. Forms a complex with GatZ. The cofactor is Zn(2+).

The catalysed reaction is D-tagatofuranose 1,6-bisphosphate = D-glyceraldehyde 3-phosphate + dihydroxyacetone phosphate. The protein operates within carbohydrate metabolism; D-tagatose 6-phosphate degradation; D-glyceraldehyde 3-phosphate and glycerone phosphate from D-tagatose 6-phosphate: step 2/2. Its function is as follows. Catalytic subunit of the tagatose-1,6-bisphosphate aldolase GatYZ, which catalyzes the reversible aldol condensation of dihydroxyacetone phosphate (DHAP or glycerone-phosphate) with glyceraldehyde 3-phosphate (G3P) to produce tagatose 1,6-bisphosphate (TBP). Requires GatZ subunit for full activity and stability. Is involved in the catabolism of galactitol. The protein is D-tagatose-1,6-bisphosphate aldolase subunit GatY of Salmonella paratyphi B (strain ATCC BAA-1250 / SPB7).